A 238-amino-acid polypeptide reads, in one-letter code: Purine nucleoside phosphorylase DeoD-type (238 aa).

His-4 contacts a purine D-ribonucleoside. Phosphate is bound by residues Gly-20, Arg-24, Arg-43, and 87–90 (RVGS). Residues 179–181 (EME) and 203–204 (SD) contribute to the a purine D-ribonucleoside site. Residue Asp-204 is the Proton donor of the active site.

This sequence belongs to the PNP/UDP phosphorylase family. In terms of assembly, homohexamer; trimer of homodimers.

It carries out the reaction a purine D-ribonucleoside + phosphate = a purine nucleobase + alpha-D-ribose 1-phosphate. The catalysed reaction is a purine 2'-deoxy-D-ribonucleoside + phosphate = a purine nucleobase + 2-deoxy-alpha-D-ribose 1-phosphate. Functionally, catalyzes the reversible phosphorolytic breakdown of the N-glycosidic bond in the beta-(deoxy)ribonucleoside molecules, with the formation of the corresponding free purine bases and pentose-1-phosphate. In Actinobacillus succinogenes (strain ATCC 55618 / DSM 22257 / CCUG 43843 / 130Z), this protein is Purine nucleoside phosphorylase DeoD-type.